Reading from the N-terminus, the 259-residue chain is Flap endonuclease Xni (259 aa).

Asp109 is a binding site for Mg(2+). The region spanning 165–255 (VTPAQLTDYW…FNLQDIRFNS (91 aa)) is the 5'-3' exonuclease domain. Residues Leu176, Pro185, Val187, and Ile190 each coordinate K(+). Residues 189 to 194 (GIGPKA) are interaction with DNA.

It belongs to the Xni family. Requires Mg(2+) as cofactor. K(+) is required as a cofactor.

Has flap endonuclease activity. During DNA replication, flap endonucleases cleave the 5'-overhanging flap structure that is generated by displacement synthesis when DNA polymerase encounters the 5'-end of a downstream Okazaki fragment. The chain is Flap endonuclease Xni from Vibrio cholerae serotype O1 (strain ATCC 39315 / El Tor Inaba N16961).